The sequence spans 333 residues: Testin-2 (333 aa).

The N-terminal stretch at 1–17 (MIAVLFLAILCLEVDST) is a signal peptide. Cystine bridges form between cysteine 135–cysteine 178, cysteine 169–cysteine 211, and cysteine 269–cysteine 322. A glycan (N-linked (GlcNAc...) asparagine) is linked at asparagine 173. Residues histidine 276 and asparagine 300 contribute to the active site.

It belongs to the peptidase C1 family. As to expression, sertoli cells.

The protein resides in the secreted. The polypeptide is Testin-2 (Testin) (Rattus norvegicus (Rat)).